The chain runs to 257 residues: Ribosomal RNA small subunit methyltransferase A (257 aa).

Residues Asn-12, Leu-14, Gly-39, Glu-60, Asp-85, and Asn-105 each contribute to the S-adenosyl-L-methionine site.

The protein belongs to the class I-like SAM-binding methyltransferase superfamily. rRNA adenine N(6)-methyltransferase family. RsmA subfamily.

The protein localises to the cytoplasm. The enzyme catalyses adenosine(1518)/adenosine(1519) in 16S rRNA + 4 S-adenosyl-L-methionine = N(6)-dimethyladenosine(1518)/N(6)-dimethyladenosine(1519) in 16S rRNA + 4 S-adenosyl-L-homocysteine + 4 H(+). Its function is as follows. Specifically dimethylates two adjacent adenosines (A1518 and A1519) in the loop of a conserved hairpin near the 3'-end of 16S rRNA in the 30S particle. May play a critical role in biogenesis of 30S subunits. This is Ribosomal RNA small subunit methyltransferase A from Methylococcus capsulatus (strain ATCC 33009 / NCIMB 11132 / Bath).